We begin with the raw amino-acid sequence, 545 residues long: Ubiquitin carboxyl-terminal hydrolase 17-like protein D (545 aa).

Residues Cys-51–Gln-348 form the USP domain. Cys-60 acts as the Nucleophile in catalysis. Residue His-307 is the Proton acceptor of the active site. Disordered stretches follow at residues Leu-367 to Gln-443 and Arg-521 to Arg-545. Over residues Lys-374–Ser-385 the composition is skewed to basic residues. Residues Glu-393–Lys-404 show a composition bias toward basic and acidic residues. Residues Gly-524–Gln-537 are compositionally biased toward basic residues.

This sequence belongs to the peptidase C19 family. USP17 subfamily. As to expression, detected in T-cell, myeloid, and embryonic stem cell lines.

The protein resides in the nucleus. It localises to the endoplasmic reticulum. It catalyses the reaction Thiol-dependent hydrolysis of ester, thioester, amide, peptide and isopeptide bonds formed by the C-terminal Gly of ubiquitin (a 76-residue protein attached to proteins as an intracellular targeting signal).. Its function is as follows. Deubiquitinating enzyme that removes conjugated ubiquitin from specific proteins to regulate different cellular processes that may include cell proliferation, progression through the cell cycle, apoptosis, cell migration, and the cellular response to viral infection. This chain is Ubiquitin carboxyl-terminal hydrolase 17-like protein D, found in Mus musculus (Mouse).